The primary structure comprises 78 residues: Large ribosomal subunit protein bL28 (78 aa).

The disordered stretch occupies residues 1-20; it reads MSRVCQVTGKRPAVGNNRSH.

The protein belongs to the bacterial ribosomal protein bL28 family.

This chain is Large ribosomal subunit protein bL28, found in Actinobacillus pleuropneumoniae serotype 7 (strain AP76).